The chain runs to 398 residues: Na(+)/H(+) antiporter NhaA (398 aa).

12 helical membrane passes run 9-29 (MITH…AAIV), 57-77 (LSLL…AVGL), 95-115 (AFPA…YSLM), 124-144 (AGWA…LALL), 154-174 (VFML…IALF), 177-197 (TALE…MALM), 204-224 (FLSL…LSGI), 226-246 (ATLA…STEV), 255-275 (WLQP…NAGI), 288-308 (FLPL…IVLF), 329-349 (IAAA…IANL), and 359-379 (IVLA…LGYL).

The protein belongs to the NhaA Na(+)/H(+) (TC 2.A.33) antiporter family.

The protein resides in the cell inner membrane. The enzyme catalyses Na(+)(in) + 2 H(+)(out) = Na(+)(out) + 2 H(+)(in). In terms of biological role, na(+)/H(+) antiporter that extrudes sodium in exchange for external protons. This Sodalis glossinidius (strain morsitans) protein is Na(+)/H(+) antiporter NhaA.